The sequence spans 359 residues: Histamine H2 receptor (359 aa).

The Extracellular segment spans residues 1–22 (MISNGTGSSFCLDSPPCRITVS). The N-linked (GlcNAc...) asparagine glycan is linked to Asn-4. The helical transmembrane segment at 23 to 44 (VVLTVLILITIAGNVVVCLAVG) threads the bilayer. Residues 45–57 (LNRRLRSLTNCFI) lie on the Cytoplasmic side of the membrane. The chain crosses the membrane as a helical span at residues 58 to 81 (VSLAITDLLLGLLVLPFSAFYQLS). At 82–92 (CRWSFGKVFCN) the chain is on the extracellular side. The cysteines at positions 91 and 174 are disulfide-linked. A helical transmembrane segment spans residues 93–114 (IYTSLDVMLCTASILNLFMISL). Residues 115–134 (DRYCAVTDPLRYPVLITPVR) lie on the Cytoplasmic side of the membrane. A helical transmembrane segment spans residues 135-159 (VAVSLVLIWVISITLSFLSIHLGWN). Over 160–180 (SRNETSSFNHTIPKCKVQVNL) the chain is Extracellular. The helical transmembrane segment at 181–204 (VYGLVDGLVTFYLPLLVMCITYYR) threads the bilayer. Residues 205 to 234 (IFKIARDQAKRIHHMGSWKAATIGEHKATV) are Cytoplasmic-facing. Residues 235-258 (TLAAVMGAFIICWFPYFTVFVYRG) traverse the membrane as a helical segment. Topologically, residues 259–267 (LKGDDAINE) are extracellular. A helical membrane pass occupies residues 268 to 289 (AFEAVVLWLGYANSALNPILYA). Topologically, residues 290 to 359 (TLNRDFRTAY…VTAPRGATDR (70 aa)) are cytoplasmic. The S-palmitoyl cysteine moiety is linked to residue Cys-305. Residues 310 to 327 (HNAQETSLRSNSSQLARN) are compositionally biased toward polar residues. The segment at 310 to 359 (HNAQETSLRSNSSQLARNQSREPMRQEEKPLKLQVWSGTEVTAPRGATDR) is disordered. Over residues 328–340 (QSREPMRQEEKPL) the composition is skewed to basic and acidic residues.

The protein belongs to the G-protein coupled receptor 1 family. In terms of tissue distribution, gastric fundus and, to a lesser extent, in brain.

Its subcellular location is the cell membrane. Its function is as follows. The H2 subclass of histamine receptors mediates gastric acid secretion. The activity of this receptor is mediated by G proteins which activate adenylyl cyclase. The sequence is that of Histamine H2 receptor (HRH2) from Canis lupus familiaris (Dog).